Consider the following 494-residue polypeptide: O-acetyltransferase ptmV (494 aa).

Residues 181–203 (ESQQDSREKLRHSGGPPDPRFDH) are disordered.

This sequence belongs to the fumigaclavine B O-acetyltransferase family. In terms of assembly, monomer.

It participates in secondary metabolite biosynthesis. Functionally, O-acetyltransferase; part of the gene cluster that mediates the biosynthesis of the indole diterpenes penitrems. The geranylgeranyl diphosphate (GGPP) synthase ptmG catalyzes the first step in penitrem biosynthesis via conversion of farnesyl pyrophosphate and isopentyl pyrophosphate into geranylgeranyl pyrophosphate (GGPP). Condensation of indole-3-glycerol phosphate with GGPP by the prenyl transferase ptmC then forms 3-geranylgeranylindole (3-GGI). Epoxidation by the FAD-dependent monooxygenase ptmM leads to a epoxidized-GGI that is substrate of the terpene cyclase ptmB for cyclization to yield paspaline. Paspaline is subsequently converted to 13-desoxypaxilline by the cytochrome P450 monooxygenase ptmP, the latter being then converted to paxilline by the cytochrome P450 monooxygenase ptmQ. Paxilline is converted to beta-paxitriol via C-10 ketoreduction by the short-chain dehydrogenase ptmH which can be monoprenylated at the C-20 by the indole diterpene prenyltransferase ptmD. A two-step elimination (acetylation and elimination) process performed by the O-acetyltransferase ptmV and ptmI leads to the production of the prenylated form of penijanthine. The FAD-linked oxidoreductase ptmO then converts the prenylated form of penijanthine into PC-M5 which is in turn transformed into PC-M4 by the aromatic dimethylallyltransferase ptmE. Five sequential oxidative transformations performed by the cytochrome P450 monooxygenases ptmK, ptmU, ptmL, ptmN and ptmJ yield the various penitrem compounds. PtmK, ptmU and ptmM are involved in the formation of the key bicyclic ring of penitrem C via the formation of the intermediates secopenitrem D and penitrem D. PtmL catalyzes the epoxidation of penitrem D and C to yield penitrem B and F, respectively. PtmJ catalyzes the last benzylic hydroxylation to convert penitrem B to prenitrem E and penitrem F to penitrem A. The chain is O-acetyltransferase ptmV from Penicillium ochrochloron.